The sequence spans 152 residues: Large ribosomal subunit protein uL15 (152 aa).

Residues 31 to 58 are disordered; that stretch reads GASCGFGMRGQKSRSGRPTRPGFEGGQM.

The protein belongs to the universal ribosomal protein uL15 family. In terms of assembly, part of the 50S ribosomal subunit.

Binds to the 23S rRNA. This chain is Large ribosomal subunit protein uL15, found in Parasynechococcus marenigrum (strain WH8102).